The chain runs to 406 residues: Protein phosphatase 2C (406 aa).

Residues 23-274 form the PPM-type phosphatase domain; it reads RCGSNCVNGY…DNISCMIVQF (252 aa). Asp55, Gly56, Asp221, and Asp265 together coordinate Mn(2+).

It belongs to the PP2C family. As to quaternary structure, monomer. Mg(2+) is required as a cofactor. It depends on Mn(2+) as a cofactor.

The catalysed reaction is O-phospho-L-seryl-[protein] + H2O = L-seryl-[protein] + phosphate. It carries out the reaction O-phospho-L-threonyl-[protein] + H2O = L-threonyl-[protein] + phosphate. Functionally, enzyme with a broad specificity. The protein is Protein phosphatase 2C of Leishmania chagasi.